Reading from the N-terminus, the 159-residue chain is Biogenesis of lysosome-related organelles complex 1 subunit 2 (159 aa).

The interval 1–37 is disordered; it reads MDKPTTSAAAAAAQDSNLLPDSPQHGPTLSSASSFEA. Residues 14 to 36 show a composition bias toward polar residues; the sequence is QDSNLLPDSPQHGPTLSSASSFE. Residues 69 to 134 are a coiled coil; it reads EDYKLLEEMN…KLEAAAYKLD (66 aa).

It belongs to the BLOC1S2 family. In terms of assembly, homodimer. Component of the biogenesis of lysosome-related organelles complex-1 (BLOC-1) composed of Blos1, Blos2, Blos3, Blos4, Dysb, Muted, Pldn and Snapin. Interacts with Snapin.

In terms of biological role, component of the biogenesis of lysosome-related organelles complex-1 (BLOC-1) involved in pigment granule biogenesis. In Drosophila melanogaster (Fruit fly), this protein is Biogenesis of lysosome-related organelles complex 1 subunit 2.